We begin with the raw amino-acid sequence, 484 residues long: Acid alpha-amylase (484 aa).

N-linked (GlcNAc...) asparagine glycosylation is present at N24. C30 and C38 are disulfide-bonded. W83 serves as a coordination point for substrate. D121 is a Ca(2+) binding site. Position 122 (H122) interacts with substrate. C150 and C164 are disulfide-bonded. N-linked (GlcNAc...) asparagine glycosylation occurs at N157. Ca(2+)-binding residues include E162 and D175. N-linked (GlcNAc...) asparagine glycosylation is present at N197. R204 contributes to the substrate binding site. The Ca(2+) site is built by D206, E210, and E230. D206 (nucleophile) is an active-site residue. 209-210 (LE) lines the substrate pocket. The active-site Proton donor is E230. G234 contributes to the substrate binding site. C240 and C283 are oxidised to a cystine. 2 residues coordinate substrate: D297 and R344. Residues C440 and C475 are joined by a disulfide bond.

The protein belongs to the glycosyl hydrolase 13 family. In terms of assembly, monomer. Requires Ca(2+) as cofactor.

The protein localises to the secreted. It catalyses the reaction Endohydrolysis of (1-&gt;4)-alpha-D-glucosidic linkages in polysaccharides containing three or more (1-&gt;4)-alpha-linked D-glucose units.. The protein is Acid alpha-amylase of Aspergillus niger.